A 700-amino-acid chain; its full sequence is Leucine zipper putative tumor suppressor 3 (700 aa).

Disordered stretches follow at residues 1-20, 40-121, 133-188, and 202-344; these read MAPA…PAPH, RADP…SEDK, LRGS…SEPL, and FHSM…PPSP. Residues 109 to 121 are compositionally biased toward basic and acidic residues; it reads NRERPGRYPSEDK. The span at 203 to 216 shows a compositional bias: polar residues; sequence HSMQNLCPPQTNGT. Composition is skewed to low complexity over residues 248–265 and 301–321; these read DSGR…SSYS and GTSD…MGRS. Positions 322 to 333 are enriched in gly residues; it reads GHLGSGEGGNGG. Phosphoserine is present on residues S343 and S345. 2 coiled-coil regions span residues 345–523 and 597–666; these read SALI…SLRD and TRAL…RLRE. The interval 662 to 700 is disordered; it reads RRLRERGAAGGSSTPTPQHGEEKKAWTPSRLERIESTEI. Residues 680–700 show a composition bias toward basic and acidic residues; it reads HGEEKKAWTPSRLERIESTEI.

This sequence belongs to the LZTS3 family. In terms of assembly, interacts (via C-terminus) with SHANK3 (via PDZ domain). Interacts (via coiled coil) with SIPA1L1. Can form homooligomers.

It is found in the synapse. The protein localises to the postsynaptic density. It localises to the cell projection. Its subcellular location is the dendritic spine. The protein resides in the dendrite. It is found in the cytoplasm. The protein localises to the cytoskeleton. Functionally, may be involved in promoting the maturation of dendritic spines, probably via regulating SIPA1L1 levels at the postsynaptic density of synapses. The polypeptide is Leucine zipper putative tumor suppressor 3 (Mus musculus (Mouse)).